The following is a 453-amino-acid chain: BPI fold-containing family B member 6 (453 aa).

An N-terminal signal peptide occupies residues 1-18 (MLRILCLALCSLLTGTRA). An N-linked (GlcNAc...) asparagine glycan is attached at N114. A disulfide bridge links C137 with C174. N190 carries an N-linked (GlcNAc...) asparagine glycan.

This sequence belongs to the BPI/LBP/Plunc superfamily. BPI/LBP family. As to expression, detected at very low levels in normal tonsils, and at higher levels in hypertrophic tonsils.

It is found in the secreted. This chain is BPI fold-containing family B member 6 (BPIFB6), found in Homo sapiens (Human).